Reading from the N-terminus, the 719-residue chain is Protein Hook homolog 2 (719 aa).

Residues 1 to 161 (MSVDKAELCG…ELMTKDTPDS (161 aa)) form a required for localization to the centrosome and induction of aggresome formation region. The sufficient for interaction with microtubules stretch occupies residues 1 to 548 (MSVDKAELCG…LKRKLEEHLQ (548 aa)). One can recognise a Calponin-homology (CH) domain in the interval 6–122 (AELCGSLLTW…KLLQLVLGCA (117 aa)). Residue serine 163 is modified to Phosphoserine. 2 coiled-coil regions span residues 180–427 (LSEE…AQLQ) and 455–607 (AELR…VDKA). Phosphothreonine is present on threonine 230. The required for localization to the centrosome and induction of aggresome formation stretch occupies residues 533-719 (DAISILLKRK…SLNLRPTDKH (187 aa)). The sufficient for interaction with CNTRL stretch occupies residues 584–719 (HNLQKKDADL…SLNLRPTDKH (136 aa)). Residues 696–719 (LATNSRRGPLGRLASLNLRPTDKH) form a disordered region. Serine 710 bears the Phosphoserine mark.

It belongs to the hook family. Self-associates. Component of the FTS/Hook/FHIP complex (FHF complex), composed of AKTIP/FTS, FHIP1B, and one or more members of the Hook family of proteins HOOK1, HOOK2, and HOOK3. May interact directly with AKTIP/FTS, HOOK1 and HOOK3. Associates with several subunits of the homotypic vesicular sorting complex (the HOPS complex) including VPS16 and VPS41; these interactions may be indirect. Interacts with CNTRL. Interacts with microtubules. Interacts with ZC3H14. Interacts with LRGUK (via guanylate kinase-like domain). Interacts with CCDC181. Interacts with AP4M1; the interaction is direct, mediates the interaction between FTS-Hook-FHIP (FHF) complex and AP-4 and the perinuclear distribution of AP-4.

It is found in the cytoplasm. The protein localises to the cytoskeleton. It localises to the microtubule organizing center. Its subcellular location is the centrosome. The protein resides in the golgi apparatus. It is found in the trans-Golgi network. Component of the FTS/Hook/FHIP complex (FHF complex). The FHF complex may function to promote vesicle trafficking and/or fusion via the homotypic vesicular protein sorting complex (the HOPS complex). Contributes to the establishment and maintenance of centrosome function. May function in the positioning or formation of aggresomes, which are pericentriolar accumulations of misfolded proteins, proteasomes and chaperones. FHF complex promotes the distribution of AP-4 complex to the perinuclear area of the cell. The chain is Protein Hook homolog 2 (HOOK2) from Homo sapiens (Human).